Here is a 303-residue protein sequence, read N- to C-terminus: ATP synthase gamma chain (303 aa).

This sequence belongs to the ATPase gamma chain family. F-type ATPases have 2 components, CF(1) - the catalytic core - and CF(0) - the membrane proton channel. CF(1) has five subunits: alpha(3), beta(3), gamma(1), delta(1), epsilon(1). CF(0) has three main subunits: a, b and c.

The protein resides in the cell inner membrane. Its function is as follows. Produces ATP from ADP in the presence of a proton gradient across the membrane. The gamma chain is believed to be important in regulating ATPase activity and the flow of protons through the CF(0) complex. This is ATP synthase gamma chain from Bartonella quintana (strain Toulouse) (Rochalimaea quintana).